The sequence spans 336 residues: MPKTETYPRLLADIGGTNARFGLEVASRQIECIEVLRCEDFESLSDAVRFYLSKHQESLKLCPIYGSFAVATPIMGDFVQMTNNHWTFSIETTRQCLGLERLLVVNDFVAQAFAISTMQENDLAQVGGIKCEINAPKAVLGPGTGLGVSTLIQNSDGSLKVLPGEGGHVSFAPFDDLEILVWQYARSKFNHVSAERFLSGSGLVLIYEALSKRKSMEKVAKLSKAELTPQIISERALNGDYPLCRLTLDTFCSMLGTLAADVALTLGARGGVYLCGGIIPRFIDYFKTSPFRARFETKGRMGAFLASIPVHVVLKKTPGLDGVGIALENYLLHDKI.

An ATP-binding site is contributed by Ala-12–Thr-17.

Belongs to the bacterial glucokinase family.

The protein localises to the cytoplasm. The catalysed reaction is D-glucose + ATP = D-glucose 6-phosphate + ADP + H(+). This is Glucokinase from Helicobacter acinonychis (strain Sheeba).